The primary structure comprises 238 residues: DnaA regulatory inactivator Hda (238 aa).

The protein belongs to the DnaA family. HdA subfamily. The active form seems to be an ADP-bound monomer. Forms the RIDA complex (regulatory inactivation of DnaA) of ATP-DnaA, ADP-Hda and the DNA-loaded beta sliding clamp (dnaN).

In terms of biological role, mediates the interaction of DNA replication initiator protein DnaA with DNA polymerase subunit beta sliding clamp (dnaN). Stimulates hydrolysis of ATP-DnaA to ADP-DnaA, rendering DnaA inactive for reinitiation, a process called regulatory inhibition of DnaA or RIDA. The chain is DnaA regulatory inactivator Hda from Pectobacterium atrosepticum (strain SCRI 1043 / ATCC BAA-672) (Erwinia carotovora subsp. atroseptica).